The chain runs to 85 residues: Large ribosomal subunit protein bL27 (85 aa).

The disordered stretch occupies residues 1–20; that stretch reads MAHKKGASSSRNGRDSNAQR. Polar residues predominate over residues 7 to 19; the sequence is ASSSRNGRDSNAQ.

It belongs to the bacterial ribosomal protein bL27 family.

The protein is Large ribosomal subunit protein bL27 of Kineococcus radiotolerans (strain ATCC BAA-149 / DSM 14245 / SRS30216).